We begin with the raw amino-acid sequence, 685 residues long: Stromal interaction molecule 1 (685 aa).

A signal peptide spans 1–22 (MDVCARLALWLLWGLLLHQGQS). Topologically, residues 23–213 (LSHSHSEKNT…LLTRHNHLKD (191 aa)) are extracellular. A disordered region spans residues 24–43 (SHSHSEKNTGASSGATSEES). Positions 32-41 (TGASSGATSE) are enriched in low complexity. 2 consecutive EF-hand domains span residues 64–97 (SFEAVRNIHKLMDDDANGDVDVEESDEFLREDLN) and 102–126 (TVKHSTFHGEDKLISVEDLWKAWKA). Residues Asp-76, Asp-78, Asn-80, Asp-82, and Glu-87 each coordinate Ca(2+). 2 N-linked (GlcNAc...) asparagine glycosylation sites follow: Asn-131 and Asn-171. An SAM domain is found at 132-200 (WTVDEVIQWL…QLKALDTVLF (69 aa)). Residues 214–234 (FMLVVSIVIGVGGCWFAYIQN) form a helical membrane-spanning segment. The Cytoplasmic portion of the chain corresponds to 235–685 (RYSKEHMKKM…LKIFKKPLKK (451 aa)). Residues 248 to 442 (LEGLHRAEQS…IEILCGFQIV (195 aa)) adopt a coiled-coil conformation. Ser-257 is subject to Phosphoserine. The SOAR/CAD stretch occupies residues 344–442 (PEALQKWLQL…IEILCGFQIV (99 aa)). The tract at residues 475 to 483 (DDVDDMDEE) is contributes to fast Ca(2+)-dependent inactivation of CRAC channels. A compositionally biased stretch (low complexity) spans 490 to 499 (MQSPSLQSSV). Positions 490–542 (MQSPSLQSSVRQRLTEPQHGLGSQRDLTHSDSESSLHTSDRQRVAPKPPQMGR) are disordered. Position 504 is a phosphothreonine (Thr-504). A Phosphoserine modification is found at Ser-512. Residues 515-532 (DLTHSDSESSLHTSDRQR) are compositionally biased toward basic and acidic residues. Thr-517 is modified (phosphothreonine). Phosphoserine occurs at positions 519, 521, 523, 524, 567, 575, 602, 608, 618, 621, and 628. The interval 596-685 (LMELNPSVPP…LKIFKKPLKK (90 aa)) is disordered. Residues 608 to 620 (SPLLDSSHSHSPS) are compositionally biased toward low complexity. A Microtubule tip localization signal motif is present at residues 642–645 (TRIP). Positions 655–666 (EEDNGSIGEETD) are enriched in acidic residues. The residue at position 660 (Ser-660) is a Phosphoserine. Thr-665 is subject to Phosphothreonine. Residue Ser-668 is modified to Phosphoserine. Over residues 670–685 (GRKKFPLKIFKKPLKK) the composition is skewed to basic residues. The interval 672–685 (KKFPLKIFKKPLKK) is required for generation of inwardly rectifying CRAC currents.

Monomer in the presence of Ca(2+). It oligomerizes in absence of Ca(2+). Forms homooligomers and heterooligomers with STIM2. Interacts with pore-forming subunits of CRAC channels, ORAI1, ORAI2 and ORAI3; this interaction is potentiated upon Ca(2+) store depletion. Interacts (via the transmembrane region and the SOAR/CAD domain) with SPPL3; the interaction promotes the binding of STIM1 to ORAI1. Interacts with ORAI1. Interacts with MAPRE1; probably required for targeting to the growing microtubule plus ends. Interacts with CRACR2A/EFCAB4B; the interaction is direct and takes place in absence of Ca(2+). Forms a complex with CRACR2A/EFCAB4B and ORAI1 at low concentration of Ca(2+), the complex dissociates at elevated Ca(2+) concentrations. Interacts with SARAF, promoting a slow inactivation of STIM1-dependent SOCE activity, possibly by facilitating the deoligomerization of STIM1. Interacts with EFHB; the interaction takes place upon Ca(2+)-store depletion and inhibits the association with SARAF. Interacts with ASPH. Interacts with SLC35G1; intracellular Ca(2+)-dependent. May interact with ATP1A1, ATP2A2, ATP2B1, ATP2B4, KPNB1 and XPO1; through SLC35G1. Interacts with TMEM203. Interacts with STIMATE, promoting STIM1 conformational switch. Interacts with TMEM178A. Interacts with CASQ1 (via C-terminal end and preferentially with the monomeric form); this interaction increases in response to a depletion of intracellular Ca(2+), decreases both STIM1 aggregation and clustering, interaction of STIM1 with ORAI1 and store-operated Ca(2+) entry (SOCE) activity. Interacts with ADCY8. Post-translationally, glycosylation is required for cell surface expression. Phosphorylated predominantly on Ser residues.

Its subcellular location is the cell membrane. It is found in the endoplasmic reticulum membrane. The protein localises to the sarcoplasmic reticulum. It localises to the cytoplasm. The protein resides in the cytoskeleton. Acts as a Ca(2+) sensor that gates two major inward rectifying Ca(2+) channels at the plasma membrane: Ca(2+) release-activated Ca(2+) (CRAC) channels and arachidonate-regulated Ca(2+)-selective (ARC) channels. Plays a role in mediating store-operated Ca(2+) entry (SOCE), a Ca(2+) influx following depletion of intracellular Ca(2+) stores. Upon Ca(2+) depletion, translocates from the endoplasmic reticulum to the plasma membrane where it activates CRAC channel pore-forming subunits ORA1, ORA2 and ORAI3 to generate sustained and oscillatory Ca(2+) entry. Involved in enamel formation. The sequence is that of Stromal interaction molecule 1 from Rattus norvegicus (Rat).